The sequence spans 195 residues: Transcription repressor OFP17 (195 aa).

An OVATE domain is found at 130–190 (EDNAVEDACR…SRFYGELCRD (61 aa)).

It is found in the nucleus. Its function is as follows. Transcriptional repressor that may regulate multiple aspects of plant growth and development through the regulation of BEL1-LIKE (BLH) and KNOX TALE (KNAT) homeodomain transcription factors. In Arabidopsis thaliana (Mouse-ear cress), this protein is Transcription repressor OFP17 (OFP17).